Consider the following 835-residue polypeptide: MKRRNDSECTAPLKKQKKRVAELALSLSSTSDDEPPSSVNHAAKASATSLSGSDSETEGKQRSSDSFDDAFKADSLVEGTSSRYSMYNSVSQKLMAKMGFKEGEGLGKYSQGRKDIVEASNQKGRRGLGLTLQGFDQELNVNWRDEPEPSACEQVSWFPECTTEIPDTQEMSDWMVVGKRKMIIEDETEFCGEGLLRSVLKCKSVFDVLDGEEMRRARTRANPYEMIRGVFFLNRAAMKMANMDFVFDRMFTNPRDSYGKPLVKDREAELLYFADVCAGPGGFSEYVLWRKRWHAKGFGLTLKGPHDFKLEDFYSASSELFEPYYGEGGIDGDGDITRPENINAFRNFVLDNTDHKGVHFLMADGGFSVEGQENLQEILSKQLLLCQFLMALSVVRTGGHFICKTFDLFTPFSVGLIYLLYCCFERVCLFKPITSRPANSERYVVCKGLKVGIDEVRDYLFSVNIKLNQLRNTDSDVNLVVPLEVIKGDHEFTDYMIRSNEGHCSLQIKALAKIRAFVQDTTLIEPRQAEIRKECLRLWGIPDQARVAPSSTDPKSKFFELIQGTEIDIFSYKPTPLTAKTLEKIRPVLDYRCMVSGSEQKFLIGLGKSQIYTWDGRQSDRWVKLDLKTELPRDTLLSVEIVHELKGEGKAQRKISAIHILDVLVLNGSDVREQHFNQRIQLAEKFVKAVSKPSRPDMNPIRVKEVYRLEEMEKIFVRLEMKIIKGSSGTPKLSYTGRDDRHFVPTGLYIVRTVNEPWTMGFSKSFKRKFFYNKKTKNSTFDLPADAIAPFHICYYGRLFWEWGDGIRVHESQKPQDPDKLSKEDVLSFIQTHSA.

The interval 1 to 66 (MKRRNDSECT…TEGKQRSSDS (66 aa)) is disordered. Residues 2 to 19 (KRRNDSECTAPLKKQKKR) carry the Bipartite nuclear localization signal motif. A phosphoserine mark is found at Ser28, Ser31, Ser53, Ser66, and Ser91. The span at 57 to 66 (TEGKQRSSDS) shows a compositional bias: basic and acidic residues. The G-patch domain occupies 87 to 133 (YNSVSQKLMAKMGFKEGEGLGKYSQGRKDIVEASNQKGRRGLGLTLQ). Position 108 is an N6-acetyllysine (Lys108). Substrate is bound by residues 203 to 207 (KSVFD) and Arg218. One can recognise a RrmJ-type SAM-dependent 2'-O-MTase domain in the interval 231-450 (FFLNRAAMKM…ERYVVCKGLK (220 aa)). Asn234 provides a ligand contact to S-adenosyl-L-methionine. The active site involves Lys239. S-adenosyl-L-methionine-binding positions include 277 to 283 (CAGPGGF) and 335 to 336 (DI). The active site involves Asp364. 374 to 376 (NLQ) provides a ligand contact to substrate. The active-site Proton acceptor is the Lys404. Asn439 contacts substrate. The segment at 727–835 (SSGTPKLSYT…VLSFIQTHSA (109 aa)) is interaction with POLR2A. The WW domain occupies 752–786 (RTVNEPWTMGFSKSFKRKFFYNKKTKNSTFDLPAD).

In terms of assembly, interacts with POLR2A (via C-terminus).

It is found in the nucleus. It catalyses the reaction a 5'-end (N(7)-methyl 5'-triphosphoguanosine)-ribonucleoside in mRNA + S-adenosyl-L-methionine = a 5'-end (N(7)-methyl 5'-triphosphoguanosine)-(2'-O-methyl-ribonucleoside) in mRNA + S-adenosyl-L-homocysteine + H(+). Its function is as follows. S-adenosyl-L-methionine-dependent methyltransferase that mediates mRNA cap1 2'-O-ribose methylation to the 5'-cap structure of mRNAs. Methylates the ribose of the first nucleotide of a m(7)GpppG-capped mRNA and small nuclear RNA (snRNA) to produce m(7)GpppRm (cap1). Displays a preference for cap0 transcripts. Cap1 modification is linked to higher levels of translation. May be involved in the interferon response pathway. In Bos taurus (Bovine), this protein is Cap-specific mRNA (nucleoside-2'-O-)-methyltransferase 1 (CMTR1).